Consider the following 283-residue polypeptide: Pantothenate synthetase (283 aa).

An ATP-binding site is contributed by M30–H37. The active-site Proton donor is the H37. (R)-pantoate is bound at residue Q61. Q61 contributes to the beta-alanine binding site. G148–D151 provides a ligand contact to ATP. Q154 contributes to the (R)-pantoate binding site. M185–R188 contributes to the ATP binding site.

It belongs to the pantothenate synthetase family. As to quaternary structure, homodimer.

Its subcellular location is the cytoplasm. It carries out the reaction (R)-pantoate + beta-alanine + ATP = (R)-pantothenate + AMP + diphosphate + H(+). It functions in the pathway cofactor biosynthesis; (R)-pantothenate biosynthesis; (R)-pantothenate from (R)-pantoate and beta-alanine: step 1/1. Catalyzes the condensation of pantoate with beta-alanine in an ATP-dependent reaction via a pantoyl-adenylate intermediate. This Carboxydothermus hydrogenoformans (strain ATCC BAA-161 / DSM 6008 / Z-2901) protein is Pantothenate synthetase.